The primary structure comprises 55 residues: Ferredoxin (55 aa).

2 4Fe-4S ferredoxin-type domains span residues 2-27 and 28-55; these read HIIT…HEGT and GKYE…VKAE. [4Fe-4S] cluster contacts are provided by Cys8, Cys11, Cys14, Cys18, Cys37, Cys40, Cys43, and Cys47.

It depends on [4Fe-4S] cluster as a cofactor.

Its function is as follows. Ferredoxins are iron-sulfur proteins that transfer electrons in a wide variety of metabolic reactions. This chain is Ferredoxin, found in Thermoanaerobacterium thermosaccharolyticum (Clostridium thermosaccharolyticum).